Here is a 110-residue protein sequence, read N- to C-terminus: NADH-quinone oxidoreductase subunit K (110 aa).

Helical transmembrane passes span 13 to 33 (LNHYLILSSLVFTIGMFGLFM), 41 to 61 (ILMSIELMLLAVNINFVAFSI), and 73 to 93 (IIILTVAAAETSIGLAILLIY).

This sequence belongs to the complex I subunit 4L family. In terms of assembly, NDH-1 is composed of 14 different subunits. Subunits NuoA, H, J, K, L, M, N constitute the membrane sector of the complex.

The protein localises to the cell inner membrane. The catalysed reaction is a quinone + NADH + 5 H(+)(in) = a quinol + NAD(+) + 4 H(+)(out). In terms of biological role, NDH-1 shuttles electrons from NADH, via FMN and iron-sulfur (Fe-S) centers, to quinones in the respiratory chain. The immediate electron acceptor for the enzyme in this species is believed to be ubiquinone. Couples the redox reaction to proton translocation (for every two electrons transferred, four hydrogen ions are translocated across the cytoplasmic membrane), and thus conserves the redox energy in a proton gradient. This chain is NADH-quinone oxidoreductase subunit K, found in Rickettsia conorii (strain ATCC VR-613 / Malish 7).